A 347-amino-acid chain; its full sequence is NADH-quinone oxidoreductase subunit H 1 (347 aa).

The next 9 helical transmembrane spans lie at Ile13 to Val33, Pro50 to Phe70, Ala82 to Val102, Val115 to Gly135, Ile161 to Val181, Phe198 to Leu218, Cys263 to Leu283, Val286 to Val306, and Leu321 to Leu341.

Belongs to the complex I subunit 1 family. NDH-1 is composed of 14 different subunits. Subunits NuoA, H, J, K, L, M, N constitute the membrane sector of the complex.

The protein resides in the cell inner membrane. It catalyses the reaction a quinone + NADH + 5 H(+)(in) = a quinol + NAD(+) + 4 H(+)(out). Its function is as follows. NDH-1 shuttles electrons from NADH, via FMN and iron-sulfur (Fe-S) centers, to quinones in the respiratory chain. The immediate electron acceptor for the enzyme in this species is believed to be ubiquinone. Couples the redox reaction to proton translocation (for every two electrons transferred, four hydrogen ions are translocated across the cytoplasmic membrane), and thus conserves the redox energy in a proton gradient. This subunit may bind ubiquinone. The sequence is that of NADH-quinone oxidoreductase subunit H 1 from Rhizobium etli (strain ATCC 51251 / DSM 11541 / JCM 21823 / NBRC 15573 / CFN 42).